The following is a 185-amino-acid chain: Large ribosomal subunit protein uL22 (185 aa).

This sequence belongs to the universal ribosomal protein uL22 family. As to quaternary structure, part of the 50S ribosomal subunit.

Its function is as follows. This protein binds specifically to 23S rRNA. It makes multiple contacts with different domains of the 23S rRNA in the assembled 50S subunit and ribosome. The globular domain of the protein is located near the polypeptide exit tunnel on the outside of the subunit, while an extended beta-hairpin is found that lines the wall of the exit tunnel in the center of the 70S ribosome. The protein is Large ribosomal subunit protein uL22 of Pyrobaculum islandicum (strain DSM 4184 / JCM 9189 / GEO3).